The chain runs to 380 residues: Tetratricopeptide repeat protein 19, mitochondrial (380 aa).

A mitochondrion-targeting transit peptide spans 1–70 (MFRLLSWSLG…AALAWFSRPA (70 aa)). TPR repeat units follow at residues 136–169 (TYTYDLMANLAFIRGQLENAEQLFKATMSYLLGG), 179–212 (IEISLKLASIYAAQNRQEFAVAGYEFCISTLEEK), 237–270 (GMCLDACARYLLFSKQPSQAQRMYEKALQISEEI), 279–312 (IVLMSDLATTLDAQGRFDEAYIYMQRASDLARQI), and 318–351 (HMVLSNLAAVLMHRERYTQAKEIYQEALKQAKLK).

The protein belongs to the TTC19 family. Binds to the mature mitochondrial complex III dimer, after the incorporation of the Rieske protein UQCRFS1. Interacts with UQCRC1 and UQCRFS1. Interacts with ZFYVE26 and CHMP4B. Proteolytically cleaved by PARL.

Its subcellular location is the mitochondrion inner membrane. Its function is as follows. Required for the preservation of the structural and functional integrity of mitochondrial respiratory complex III by allowing the physiological turnover of the Rieske protein UQCRFS1. Involved in the clearance of UQCRFS1 N-terminal fragments, which are produced upon incorporation of UQCRFS1 into the complex III and whose presence is detrimental for its catalytic activity. This Homo sapiens (Human) protein is Tetratricopeptide repeat protein 19, mitochondrial (TTC19).